We begin with the raw amino-acid sequence, 247 residues long: Probable proteasome subunit alpha type-5 (247 aa).

Threonine 55 is subject to Phosphothreonine.

Belongs to the peptidase T1A family. In terms of assembly, the 26S proteasome consists of a 20S proteasome core and two 19S regulatory subunits. The 20S proteasome core is composed of 28 subunits that are arranged in four stacked rings, resulting in a barrel-shaped structure. The two end rings are each formed by seven alpha subunits, and the two central rings are each formed by seven beta subunits. The catalytic chamber with the active sites is on the inside of the barrel.

The protein localises to the cytoplasm. It is found in the nucleus. Its function is as follows. The proteasome is a multicatalytic proteinase complex which is characterized by its ability to cleave peptides with Arg, Phe, Tyr, Leu, and Glu adjacent to the leaving group at neutral or slightly basic pH. The proteasome has an ATP-dependent proteolytic activity. The polypeptide is Probable proteasome subunit alpha type-5 (pup2) (Schizosaccharomyces pombe (strain 972 / ATCC 24843) (Fission yeast)).